A 391-amino-acid chain; its full sequence is DNA replication and repair protein RecF (391 aa).

30-37 (GSNGQGKT) contributes to the ATP binding site.

This sequence belongs to the RecF family.

The protein resides in the cytoplasm. The RecF protein is involved in DNA metabolism; it is required for DNA replication and normal SOS inducibility. RecF binds preferentially to single-stranded, linear DNA. It also seems to bind ATP. The sequence is that of DNA replication and repair protein RecF from Saccharopolyspora erythraea (strain ATCC 11635 / DSM 40517 / JCM 4748 / NBRC 13426 / NCIMB 8594 / NRRL 2338).